The sequence spans 196 residues: GTP cyclohydrolase 1 (196 aa).

3 residues coordinate Zn(2+): C86, H89, and C158.

This sequence belongs to the GTP cyclohydrolase I family. In terms of assembly, homomer.

It catalyses the reaction GTP + H2O = 7,8-dihydroneopterin 3'-triphosphate + formate + H(+). It functions in the pathway cofactor biosynthesis; 7,8-dihydroneopterin triphosphate biosynthesis; 7,8-dihydroneopterin triphosphate from GTP: step 1/1. In Clostridium botulinum (strain Loch Maree / Type A3), this protein is GTP cyclohydrolase 1.